A 141-amino-acid polypeptide reads, in one-letter code: Large ribosomal subunit protein uL16 (141 aa).

This sequence belongs to the universal ribosomal protein uL16 family. As to quaternary structure, part of the 50S ribosomal subunit.

Binds 23S rRNA and is also seen to make contacts with the A and possibly P site tRNAs. This chain is Large ribosomal subunit protein uL16, found in Aliarcobacter butzleri (strain RM4018) (Arcobacter butzleri).